The following is a 306-amino-acid chain: Recombination-associated protein RdgC (306 aa).

It belongs to the RdgC family.

The protein resides in the cytoplasm. It localises to the nucleoid. Its function is as follows. May be involved in recombination. The polypeptide is Recombination-associated protein RdgC (Pseudomonas syringae pv. syringae (strain B728a)).